The primary structure comprises 319 residues: Acetyl-coenzyme A carboxylase carboxyl transferase subunit alpha (319 aa).

The CoA carboxyltransferase C-terminal domain occupies Asp35 to Asp296.

This sequence belongs to the AccA family. As to quaternary structure, acetyl-CoA carboxylase is a heterohexamer composed of biotin carboxyl carrier protein (AccB), biotin carboxylase (AccC) and two subunits each of ACCase subunit alpha (AccA) and ACCase subunit beta (AccD).

The protein localises to the cytoplasm. It catalyses the reaction N(6)-carboxybiotinyl-L-lysyl-[protein] + acetyl-CoA = N(6)-biotinyl-L-lysyl-[protein] + malonyl-CoA. Its pathway is lipid metabolism; malonyl-CoA biosynthesis; malonyl-CoA from acetyl-CoA: step 1/1. Functionally, component of the acetyl coenzyme A carboxylase (ACC) complex. First, biotin carboxylase catalyzes the carboxylation of biotin on its carrier protein (BCCP) and then the CO(2) group is transferred by the carboxyltransferase to acetyl-CoA to form malonyl-CoA. This Vibrio parahaemolyticus serotype O3:K6 (strain RIMD 2210633) protein is Acetyl-coenzyme A carboxylase carboxyl transferase subunit alpha.